An 863-amino-acid polypeptide reads, in one-letter code: Paramyosin (863 aa).

Residues 1–18 (MSESHVKISRTIIRGTSP) form a nonhelical region region. Positions 19-836 (STVRLESRVR…ERTITIKRTI (818 aa)) form a coiled coil. The segment at 837-863 (GGPGSRAVSVVREINSVSRGNRATSIM) is nonhelical region.

This sequence belongs to the paramyosin family. In terms of assembly, homodimer or monomer in secreted form.

The protein resides in the cytoplasm. The protein localises to the myofibril. Its subcellular location is the secreted. Its function is as follows. Paramyosin is a major structural component of many thick filaments isolated from invertebrate muscles. It is a prominent antigen in human cysticercosis, may have a role as a modulator of the host immune response. It is able to bind collagen and has complement inhibitor activity. The chain is Paramyosin (PMY) from Taenia solium (Pork tapeworm).